Consider the following 371-residue polypeptide: Cytochrome b (371 aa).

The next 4 membrane-spanning stretches (helical) occupy residues 25 to 45 (FGSM…FLAV), 69 to 90 (WMMQ…YIHI), 105 to 125 (WLSG…GYVL), and 170 to 190 (FFAL…LHIM). Heme b contacts are provided by histidine 75 and histidine 89. The heme b site is built by histidine 174 and histidine 188. A ubiquinone is bound at residue histidine 193. The next 4 membrane-spanning stretches (helical) occupy residues 218–238 (YKDL…VSFL), 280–300 (LGGA…PFTH), 312–332 (IMQL…WAAT), and 339–358 (FTMI…IMNP).

Belongs to the cytochrome b family. The cytochrome bc1 complex contains 3 respiratory subunits (MT-CYB, CYC1 and UQCRFS1), 2 core proteins (UQCRC1 and UQCRC2) and probably 6 low-molecular weight proteins. Requires heme b as cofactor.

Its subcellular location is the mitochondrion inner membrane. Component of the ubiquinol-cytochrome c reductase complex (complex III or cytochrome b-c1 complex) that is part of the mitochondrial respiratory chain. The b-c1 complex mediates electron transfer from ubiquinol to cytochrome c. Contributes to the generation of a proton gradient across the mitochondrial membrane that is then used for ATP synthesis. This Eryx miliaris (Desert sand boa) protein is Cytochrome b (MT-CYB).